A 395-amino-acid chain; its full sequence is Secreted aspartyl protease 1 (395 aa).

Positions 1–20 (MQLSIQAIIGFVVAAGLAVA) are cleaved as a signal peptide. Residues 21-88 (SELPSPMTVN…HLLLDLIDKR (68 aa)) constitute a propeptide, removed in mature form. The N-linked (GlcNAc...) asparagine glycan is linked to asparagine 41. The region spanning 105 to 391 (WAGDVQFGQS…DMGKNRMGFA (287 aa)) is the Peptidase A1 domain. Catalysis depends on residues aspartate 121 and aspartate 283. Cysteine 321 and cysteine 352 are disulfide-bonded.

This sequence belongs to the peptidase A1 family.

It localises to the secreted. Its activity is regulated as follows. Inhibited by pepstatin A. Its function is as follows. Dominant secreted aspartyl protease that has a clear preference for aromatic residues in the P1' position directly adjacent to the cleavage site and, in particular, Trp. In addition, it generally cleaves peptides containing Lys, Arg, Phe, Tyr, or Nle (norleucine) in the P1 position, Nle and Glu at P2, and Arg and Val at P2'. Has important roles in facilitating the interaction of the yeast with the external environment. Is able to rapidly hydrolyze Staphylococcus aureus protein A, an important S.aureus virulence factor involved in immune evasion and biofilm formation. Shows anti-biofilm properties and thus plays a role in inter-kingdom interactions, beneficial for host skin health. This is Secreted aspartyl protease 1 from Malassezia globosa (strain ATCC MYA-4612 / CBS 7966) (Dandruff-associated fungus).